We begin with the raw amino-acid sequence, 513 residues long: Bifunctional purine biosynthesis protein PurH (513 aa).

The MGS-like domain maps to 1-145; sequence MTKRALISVS…KNYQDVTAVV (145 aa).

The protein belongs to the PurH family.

It catalyses the reaction (6R)-10-formyltetrahydrofolate + 5-amino-1-(5-phospho-beta-D-ribosyl)imidazole-4-carboxamide = 5-formamido-1-(5-phospho-D-ribosyl)imidazole-4-carboxamide + (6S)-5,6,7,8-tetrahydrofolate. The enzyme catalyses IMP + H2O = 5-formamido-1-(5-phospho-D-ribosyl)imidazole-4-carboxamide. It participates in purine metabolism; IMP biosynthesis via de novo pathway; 5-formamido-1-(5-phospho-D-ribosyl)imidazole-4-carboxamide from 5-amino-1-(5-phospho-D-ribosyl)imidazole-4-carboxamide (10-formyl THF route): step 1/1. It functions in the pathway purine metabolism; IMP biosynthesis via de novo pathway; IMP from 5-formamido-1-(5-phospho-D-ribosyl)imidazole-4-carboxamide: step 1/1. This is Bifunctional purine biosynthesis protein PurH from Enterococcus faecalis (strain ATCC 700802 / V583).